The following is a 456-amino-acid chain: Bifunctional protein GlmU (456 aa).

Positions 1–229 (MLNVVILAAG…GWETLGVNSR (229 aa)) are pyrophosphorylase. UDP-N-acetyl-alpha-D-glucosamine is bound by residues 7–10 (LAAG), lysine 21, glutamine 73, 78–79 (GT), 103–105 (YGD), glycine 139, glutamate 154, asparagine 169, and asparagine 227. Aspartate 105 contacts Mg(2+). Asparagine 227 serves as a coordination point for Mg(2+). Residues 230 to 250 (VQQAELERRWQQEQARRQLEA) form a linker region. The segment at 251–456 (GVTLADPARF…EGWQRPQKKS (206 aa)) is N-acetyltransferase. UDP-N-acetyl-alpha-D-glucosamine-binding residues include arginine 333 and lysine 351. The Proton acceptor role is filled by histidine 363. Residues tyrosine 366 and asparagine 377 each contribute to the UDP-N-acetyl-alpha-D-glucosamine site. Acetyl-CoA-binding positions include alanine 380, 386 to 387 (NY), serine 405, alanine 423, and arginine 440.

In the N-terminal section; belongs to the N-acetylglucosamine-1-phosphate uridyltransferase family. The protein in the C-terminal section; belongs to the transferase hexapeptide repeat family. As to quaternary structure, homotrimer. Mg(2+) is required as a cofactor.

The protein localises to the cytoplasm. It carries out the reaction alpha-D-glucosamine 1-phosphate + acetyl-CoA = N-acetyl-alpha-D-glucosamine 1-phosphate + CoA + H(+). The enzyme catalyses N-acetyl-alpha-D-glucosamine 1-phosphate + UTP + H(+) = UDP-N-acetyl-alpha-D-glucosamine + diphosphate. The protein operates within nucleotide-sugar biosynthesis; UDP-N-acetyl-alpha-D-glucosamine biosynthesis; N-acetyl-alpha-D-glucosamine 1-phosphate from alpha-D-glucosamine 6-phosphate (route II): step 2/2. It functions in the pathway nucleotide-sugar biosynthesis; UDP-N-acetyl-alpha-D-glucosamine biosynthesis; UDP-N-acetyl-alpha-D-glucosamine from N-acetyl-alpha-D-glucosamine 1-phosphate: step 1/1. Its pathway is bacterial outer membrane biogenesis; LPS lipid A biosynthesis. In terms of biological role, catalyzes the last two sequential reactions in the de novo biosynthetic pathway for UDP-N-acetylglucosamine (UDP-GlcNAc). The C-terminal domain catalyzes the transfer of acetyl group from acetyl coenzyme A to glucosamine-1-phosphate (GlcN-1-P) to produce N-acetylglucosamine-1-phosphate (GlcNAc-1-P), which is converted into UDP-GlcNAc by the transfer of uridine 5-monophosphate (from uridine 5-triphosphate), a reaction catalyzed by the N-terminal domain. The sequence is that of Bifunctional protein GlmU from Bordetella petrii (strain ATCC BAA-461 / DSM 12804 / CCUG 43448).